A 276-amino-acid polypeptide reads, in one-letter code: Large ribosomal subunit protein uL2 (276 aa).

Residues 225 to 276 are disordered; that stretch reads MNPNDHPHGGGEGRNPIGRNPVTPWGKPALGAKTRKKKHPSNRFIVKRRGKK. Over residues 257–276 the composition is skewed to basic residues; it reads KTRKKKHPSNRFIVKRRGKK.

It belongs to the universal ribosomal protein uL2 family. Part of the 50S ribosomal subunit. Forms a bridge to the 30S subunit in the 70S ribosome.

One of the primary rRNA binding proteins. Required for association of the 30S and 50S subunits to form the 70S ribosome, for tRNA binding and peptide bond formation. It has been suggested to have peptidyltransferase activity; this is somewhat controversial. Makes several contacts with the 16S rRNA in the 70S ribosome. The sequence is that of Large ribosomal subunit protein uL2 from Desulfitobacterium hafniense (strain Y51).